The primary structure comprises 136 residues: ATP synthase epsilon chain (136 aa).

Belongs to the ATPase epsilon chain family. F-type ATPases have 2 components, CF(1) - the catalytic core - and CF(0) - the membrane proton channel. CF(1) has five subunits: alpha(3), beta(3), gamma(1), delta(1), epsilon(1). CF(0) has three main subunits: a, b and c.

The protein resides in the cell membrane. Its function is as follows. Produces ATP from ADP in the presence of a proton gradient across the membrane. In Exiguobacterium sp. (strain ATCC BAA-1283 / AT1b), this protein is ATP synthase epsilon chain.